The sequence spans 215 residues: LexA repressor (215 aa).

A DNA-binding region (H-T-H motif) is located at residues 28–48 (RAEIAAELGFSSPNAAEEHLR). Active-site for autocatalytic cleavage activity residues include Ser-133 and Lys-170.

This sequence belongs to the peptidase S24 family. In terms of assembly, homodimer.

The enzyme catalyses Hydrolysis of Ala-|-Gly bond in repressor LexA.. Represses a number of genes involved in the response to DNA damage (SOS response), including recA and lexA. In the presence of single-stranded DNA, RecA interacts with LexA causing an autocatalytic cleavage which disrupts the DNA-binding part of LexA, leading to derepression of the SOS regulon and eventually DNA repair. The chain is LexA repressor from Burkholderia ambifaria (strain ATCC BAA-244 / DSM 16087 / CCUG 44356 / LMG 19182 / AMMD) (Burkholderia cepacia (strain AMMD)).